Here is a 508-residue protein sequence, read N- to C-terminus: Steroid 17-alpha-hydroxylase/17,20 lyase (508 aa).

N202 serves as a coordination point for substrate. C442 contacts heme.

It belongs to the cytochrome P450 family. Heme serves as cofactor. Post-translationally, phosphorylation is necessary for 17,20-lyase, but not for 17-alpha-hydroxylase activity.

Its subcellular location is the endoplasmic reticulum membrane. It localises to the microsome membrane. It carries out the reaction a C21-steroid + reduced [NADPH--hemoprotein reductase] + O2 = a 17alpha-hydroxy-C21-steroid + oxidized [NADPH--hemoprotein reductase] + H2O + H(+). The enzyme catalyses progesterone + reduced [NADPH--hemoprotein reductase] + O2 = 17alpha-hydroxyprogesterone + oxidized [NADPH--hemoprotein reductase] + H2O + H(+). The catalysed reaction is pregnenolone + reduced [NADPH--hemoprotein reductase] + O2 = 17alpha-hydroxypregnenolone + oxidized [NADPH--hemoprotein reductase] + H2O + H(+). It catalyses the reaction 17alpha-hydroxyprogesterone + reduced [NADPH--hemoprotein reductase] + O2 = androst-4-ene-3,17-dione + acetate + oxidized [NADPH--hemoprotein reductase] + H2O + 2 H(+). It carries out the reaction 17alpha-hydroxyprogesterone + reduced [NADPH--hemoprotein reductase] + O2 = 16alpha,17alpha-dihydroxyprogesterone + oxidized [NADPH--hemoprotein reductase] + H2O + H(+). The enzyme catalyses 16alpha,17alpha-dihydroxyprogesterone + reduced [NADPH--hemoprotein reductase] + O2 = 6beta,16alpha,17alpha-trihydroxyprogesterone + oxidized [NADPH--hemoprotein reductase] + H2O + H(+). The catalysed reaction is 17alpha-hydroxypregnenolone + reduced [NADPH--hemoprotein reductase] + O2 = 3beta-hydroxyandrost-5-en-17-one + acetate + oxidized [NADPH--hemoprotein reductase] + H2O + 2 H(+). It catalyses the reaction 16alpha,17alpha-dihydroxypregnenolone + reduced [NADPH--hemoprotein reductase] + O2 = 3beta,16alpha-dihydroxy-androst-5-en-17-one + acetate + oxidized [NADPH--hemoprotein reductase] + H2O + 2 H(+). It carries out the reaction 3beta-hydroxyandrost-5-en-17-one + reduced [NADPH--hemoprotein reductase] + O2 = 3beta,16alpha-dihydroxy-androst-5-en-17-one + oxidized [NADPH--hemoprotein reductase] + H2O + H(+). The enzyme catalyses androst-4-ene-3,17-dione + reduced [NADPH--hemoprotein reductase] + O2 = 16alpha-hydroxyandrost-4-ene-3,17-dione + oxidized [NADPH--hemoprotein reductase] + H2O + H(+). Its pathway is steroid hormone biosynthesis. The protein operates within steroid biosynthesis; glucocorticoid biosynthesis. Its activity is regulated as follows. Regulated predominantly by intracellular cAMP levels. The 17,20-lyase activity is stimulated by cytochrome b5, which acts as an allosteric effector increasing the Vmax of the lyase activity. Its function is as follows. A cytochrome P450 monooxygenase involved in corticoid and androgen biosynthesis. Catalyzes 17-alpha hydroxylation of C21 steroids, which is common for both pathways. A second oxidative step, required only for androgen synthesis, involves an acyl-carbon cleavage. The 17-alpha hydroxy intermediates, as part of adrenal glucocorticoids biosynthesis pathway, are precursors of cortisol. Hydroxylates steroid hormones, pregnenolone and progesterone to form 17-alpha hydroxy metabolites, followed by the cleavage of the C17-C20 bond to form C19 steroids, dehydroepiandrosterone (DHEA) and androstenedione. Has 16-alpha hydroxylase activity. Catalyzes 16-alpha hydroxylation of 17-alpha hydroxy pregnenolone, followed by the cleavage of the C17-C20 bond to form 16-alpha-hydroxy DHEA. Also 16-alpha hydroxylates androgens, relevant for estriol synthesis. Mechanistically, uses molecular oxygen inserting one oxygen atom into a substrate, and reducing the second into a water molecule, with two electrons provided by NADPH via cytochrome P450 reductase (CPR; NADPH-ferrihemoprotein reductase). This Homo sapiens (Human) protein is Steroid 17-alpha-hydroxylase/17,20 lyase.